Here is a 497-residue protein sequence, read N- to C-terminus: ADP-dependent glucokinase (497 aa).

Positions 1 to 22 (MALWRGSAYAGFLALAVGCVFL) are cleaved as a signal peptide. The ADPK domain occupies 52 to 497 (SPEGRLAAAW…LFYSEVHPHL (446 aa)). Residues glutamate 297, glutamate 328, and aspartate 481 each contribute to the Mg(2+) site. Catalysis depends on aspartate 481, which acts as the Proton acceptor.

It belongs to the ADP-dependent glucokinase family. As to quaternary structure, monomer. The cofactor is Mg(2+).

Its subcellular location is the secreted. It catalyses the reaction D-glucose + ADP = D-glucose 6-phosphate + AMP + H(+). The protein operates within carbohydrate degradation; glycolysis. Its function is as follows. Catalyzes the phosphorylation of D-glucose to D-glucose 6-phosphate using ADP as the phosphate donor. GDP and CDP can replace ADP, but with reduced efficiency. The protein is ADP-dependent glucokinase (ADPGK) of Bos taurus (Bovine).